Consider the following 110-residue polypeptide: Phosphoribosyl-ATP pyrophosphatase (110 aa).

This sequence belongs to the PRA-PH family.

Its subcellular location is the cytoplasm. The enzyme catalyses 1-(5-phospho-beta-D-ribosyl)-ATP + H2O = 1-(5-phospho-beta-D-ribosyl)-5'-AMP + diphosphate + H(+). The protein operates within amino-acid biosynthesis; L-histidine biosynthesis; L-histidine from 5-phospho-alpha-D-ribose 1-diphosphate: step 2/9. The sequence is that of Phosphoribosyl-ATP pyrophosphatase from Lacticaseibacillus casei (strain BL23) (Lactobacillus casei).